A 387-amino-acid polypeptide reads, in one-letter code: Mannitol-1-phosphate 5-dehydrogenase (387 aa).

3–14 (ALHFGAGNIGRG) provides a ligand contact to NAD(+).

The protein belongs to the mannitol dehydrogenase family.

The catalysed reaction is D-mannitol 1-phosphate + NAD(+) = beta-D-fructose 6-phosphate + NADH + H(+). The protein is Mannitol-1-phosphate 5-dehydrogenase of Yersinia pseudotuberculosis serotype IB (strain PB1/+).